Consider the following 373-residue polypeptide: T-protein (373 aa).

A Chorismate mutase domain is found at 1-90; it reads MVAELTALRD…ESYSSENDKG (90 aa). The Prephenate/arogenate dehydrogenase domain occupies 99-361; sequence RPVVIVGGGG…DYAQRFQSES (263 aa).

This sequence in the C-terminal section; belongs to the prephenate/arogenate dehydrogenase family.

It localises to the cytoplasm. The catalysed reaction is chorismate = prephenate. It catalyses the reaction prephenate + NAD(+) = 3-(4-hydroxyphenyl)pyruvate + CO2 + NADH. Its pathway is amino-acid biosynthesis; L-tyrosine biosynthesis; (4-hydroxyphenyl)pyruvate from prephenate (NAD(+) route): step 1/1. It participates in metabolic intermediate biosynthesis; prephenate biosynthesis; prephenate from chorismate: step 1/1. The polypeptide is T-protein (tyrA) (Escherichia coli (strain K12)).